Reading from the N-terminus, the 363-residue chain is NADH-quinone oxidoreductase subunit H (363 aa).

10 helical membrane-spanning segments follow: residues 29 to 49 (VLKILLIAVPVIVAVAFYVVW), 62 to 82 (GPMYVGMGIFQAFADVFKLLF), 96 to 116 (FVIAPLLTLAPAFAAWSVVPF), 127 to 147 (VGLLYLLAMTSLGVYGIILAG), 163 to 183 (AAQVVSYEIAMGFALVGVMIA), 202 to 222 (FFDWFLIPLFPLFIVYWVSGV), 238 to 257 (EIVAGHMVEYSGGAFALFFL), 264 to 286 (ILVSFLISIFFLGGWLSPIQGWV), 299 to 319 (KGGWPWLLMKVFFFASAYIWF), and 339 to 359 (FIPLTIVWIAVTALMVFYGVI).

The protein belongs to the complex I subunit 1 family. In terms of assembly, NDH-1 is composed of 14 different subunits. Subunits NuoA, H, J, K, L, M, N constitute the membrane sector of the complex.

Its subcellular location is the cell inner membrane. It carries out the reaction a quinone + NADH + 5 H(+)(in) = a quinol + NAD(+) + 4 H(+)(out). Functionally, NDH-1 shuttles electrons from NADH, via FMN and iron-sulfur (Fe-S) centers, to quinones in the respiratory chain. The immediate electron acceptor for the enzyme in this species is believed to be ubiquinone. Couples the redox reaction to proton translocation (for every two electrons transferred, four hydrogen ions are translocated across the cytoplasmic membrane), and thus conserves the redox energy in a proton gradient. This subunit may bind ubiquinone. This Xanthomonas euvesicatoria pv. vesicatoria (strain 85-10) (Xanthomonas campestris pv. vesicatoria) protein is NADH-quinone oxidoreductase subunit H.